The chain runs to 431 residues: Cyclic 2,3-diphosphoglycerate synthetase (431 aa).

The protein belongs to the cyclic 2,3-diphosphoglycerate synthetase family.

The protein localises to the cytoplasm. The catalysed reaction is (2R)-2,3-bisphosphoglycerate + ATP + H(+) = cyclic (2R)-2,3-bisphosphoglycerate + ADP + phosphate. Catalyzes the formation of cyclic 2,3-diphosphoglycerate (cDPG) by formation of an intramolecular phosphoanhydride bond at the expense of ATP. This chain is Cyclic 2,3-diphosphoglycerate synthetase, found in Pyrococcus furiosus (strain ATCC 43587 / DSM 3638 / JCM 8422 / Vc1).